The following is a 180-amino-acid chain: Vacuolar ATPase assembly protein VMA22 (180 aa).

The stretch at 4–38 forms a coiled coil; that stretch reads QALREELDSKCLQLLSDLEELEAKRAALNARVEEG. Residues 90–113 form a disordered region; that stretch reads TPEEVGPSEASLRRRKGPTKTKEL.

Accessory component of the multisubunit proton-transporting vacuolar (V)-ATPase protein pump. In terms of tissue distribution, predominantly expressed in the heart, liver, kidney and testis and at lower levels in the brain and lung. Undetectable in the spleen and muscles.

It is found in the endosome. The protein resides in the lysosome. The protein localises to the endoplasmic reticulum-Golgi intermediate compartment. It localises to the cytoplasmic vesicle. Its subcellular location is the COPI-coated vesicle. It is found in the endoplasmic reticulum. In terms of biological role, accessory component of the proton-transporting vacuolar (V)-ATPase protein pump involved in intracellular iron homeostasis. In aerobic conditions, required for intracellular iron homeostasis, thus triggering the activity of Fe(2+) prolyl hydroxylase (PHD) enzymes, and leading to HIF1A hydroxylation and subsequent proteasomal degradation. Necessary for endolysosomal acidification and lysosomal degradation. May be involved in Golgi homeostasis. The protein is Vacuolar ATPase assembly protein VMA22 (Vma22) of Mus musculus (Mouse).